Consider the following 462-residue polypeptide: Glutamate--tRNA ligase 2 (462 aa).

Residues 8–18 (PSPTGYLHIGG) carry the 'HIGH' region motif. The short motif at 236–240 (KLSKR) is the 'KMSKS' region element. Residue Lys239 participates in ATP binding.

The protein belongs to the class-I aminoacyl-tRNA synthetase family. Glutamate--tRNA ligase type 1 subfamily. In terms of assembly, monomer.

It is found in the cytoplasm. It catalyses the reaction tRNA(Glu) + L-glutamate + ATP = L-glutamyl-tRNA(Glu) + AMP + diphosphate. In terms of biological role, catalyzes the attachment of glutamate to tRNA(Glu) in a two-step reaction: glutamate is first activated by ATP to form Glu-AMP and then transferred to the acceptor end of tRNA(Glu). This chain is Glutamate--tRNA ligase 2, found in Nitratiruptor sp. (strain SB155-2).